We begin with the raw amino-acid sequence, 150 residues long: Dihydroneopterin triphosphate diphosphatase (150 aa).

A Nudix hydrolase domain is found at 5 to 146 (VYKRPVSILV…SNRQAIEQFV (142 aa)). Substrate is bound by residues lysine 7, arginine 29, and threonine 40. The short motif at 41–62 (GSVEEGETAPQAAMREVKEEVT) is the Nudix box element. Mg(2+) contacts are provided by glutamate 56 and glutamate 60. 81–84 (FEIF) lines the substrate pocket. Mg(2+) is bound at residue glutamate 117. Position 135 (serine 135) interacts with substrate.

This sequence belongs to the Nudix hydrolase family. Mg(2+) is required as a cofactor.

It carries out the reaction 7,8-dihydroneopterin 3'-triphosphate + H2O = 7,8-dihydroneopterin 3'-phosphate + diphosphate + H(+). Functionally, catalyzes the hydrolysis of dihydroneopterin triphosphate to dihydroneopterin monophosphate and pyrophosphate. Required for efficient folate biosynthesis. Can also hydrolyze nucleoside triphosphates with a preference for dATP. The polypeptide is Dihydroneopterin triphosphate diphosphatase (nudB) (Escherichia coli O157:H7).